A 377-amino-acid polypeptide reads, in one-letter code: Tyrosine-protein phosphatase 2 (377 aa).

Positions 27-347 (IDKEFNFILQ…RFCYLAISEA (321 aa)) constitute a Tyrosine-protein phosphatase domain. The segment at 77 to 137 (IDDDDDDEDD…EDHGGSGDEG (61 aa)) is disordered. The segment covering 78–91 (DDDDDDEDDNEDDI) has biased composition (acidic residues). Residues 92–102 (IVSNNNNNNNN) are compositionally biased toward low complexity. Positions 113–123 (GSSGQSDVMSN) are enriched in polar residues. The Phosphocysteine intermediate role is filled by C281.

It belongs to the protein-tyrosine phosphatase family. Non-receptor class subfamily.

The enzyme catalyses O-phospho-L-tyrosyl-[protein] + H2O = L-tyrosyl-[protein] + phosphate. The sequence is that of Tyrosine-protein phosphatase 2 (ptpB) from Dictyostelium discoideum (Social amoeba).